The sequence spans 58 residues: UPF0391 membrane protein Sbal_1421 (58 aa).

2 helical membrane passes run 6–26 and 28–48; these read LVFLVVAVIAGLLGFTGIAGA and AGIAKIIFLIFIVLLVISLLV.

It belongs to the UPF0391 family.

It is found in the cell membrane. This is UPF0391 membrane protein Sbal_1421 from Shewanella baltica (strain OS155 / ATCC BAA-1091).